The primary structure comprises 734 residues: Transcriptional regulator AacuB (734 aa).

Residues 26 to 52 (CVLCQQRKIKCDRTFPCTNCVRAHVQC) constitute a DNA-binding region (zn(2)-C6 fungal-type). A compositionally biased stretch (basic and acidic residues) spans 86–107 (FDPLHTPTADHRSASDDGRDDL). The interval 86-122 (FDPLHTPTADHRSASDDGRDDLPEGAESEGTFGEREK) is disordered.

It localises to the nucleus. Its function is as follows. Transcriptional regulator; part of the gene cluster that mediates the biosynthesis of the tetrahydroxanthone dimer secalonic acid D. This chain is Transcriptional regulator AacuB, found in Aspergillus aculeatus (strain ATCC 16872 / CBS 172.66 / WB 5094).